We begin with the raw amino-acid sequence, 346 residues long: Putative agmatine deiminase (346 aa).

Cysteine 333 (amidino-cysteine intermediate) is an active-site residue.

This sequence belongs to the agmatine deiminase family.

It catalyses the reaction agmatine + H2O = N-carbamoylputrescine + NH4(+). This chain is Putative agmatine deiminase, found in Legionella pneumophila (strain Paris).